The chain runs to 439 residues: Adenylosuccinate synthetase (439 aa).

GTP contacts are provided by residues G13–K19 and G41–T43. The Proton acceptor role is filled by D14. Mg(2+) contacts are provided by D14 and G41. IMP is bound by residues D14 to K17, N39 to H42, T130, R144, Q226, T241, and R313. H42 serves as the catalytic Proton donor. A309–R315 lines the substrate pocket. GTP-binding positions include R315, K341–D343, and S422–G424.

It belongs to the adenylosuccinate synthetase family. As to quaternary structure, homodimer. Requires Mg(2+) as cofactor.

Its subcellular location is the cytoplasm. It catalyses the reaction IMP + L-aspartate + GTP = N(6)-(1,2-dicarboxyethyl)-AMP + GDP + phosphate + 2 H(+). Its pathway is purine metabolism; AMP biosynthesis via de novo pathway; AMP from IMP: step 1/2. In terms of biological role, plays an important role in the de novo pathway of purine nucleotide biosynthesis. Catalyzes the first committed step in the biosynthesis of AMP from IMP. In Acinetobacter baylyi (strain ATCC 33305 / BD413 / ADP1), this protein is Adenylosuccinate synthetase.